The chain runs to 453 residues: Bifunctional protein GlmU (453 aa).

The segment at Met-1–Lys-225 is pyrophosphorylase. Residues Leu-6 to Gly-9, Lys-20, Gln-71, Gly-76 to Thr-77, Tyr-98 to Asp-100, Gly-135, Glu-150, Asn-165, and Asn-223 each bind UDP-N-acetyl-alpha-D-glucosamine. Asp-100 contacts Mg(2+). Asn-223 contacts Mg(2+). Residues Gln-226–Ala-246 form a linker region. Residues Gly-247 to Ser-453 form an N-acetyltransferase region. Arg-329 and Lys-347 together coordinate UDP-N-acetyl-alpha-D-glucosamine. His-359 (proton acceptor) is an active-site residue. Positions 362 and 373 each coordinate UDP-N-acetyl-alpha-D-glucosamine. Acetyl-CoA is bound by residues Ala-376, Asn-382–Tyr-383, Ser-401, and Ala-419.

This sequence in the N-terminal section; belongs to the N-acetylglucosamine-1-phosphate uridyltransferase family. In the C-terminal section; belongs to the transferase hexapeptide repeat family. As to quaternary structure, homotrimer. Mg(2+) is required as a cofactor.

It localises to the cytoplasm. The enzyme catalyses alpha-D-glucosamine 1-phosphate + acetyl-CoA = N-acetyl-alpha-D-glucosamine 1-phosphate + CoA + H(+). The catalysed reaction is N-acetyl-alpha-D-glucosamine 1-phosphate + UTP + H(+) = UDP-N-acetyl-alpha-D-glucosamine + diphosphate. The protein operates within nucleotide-sugar biosynthesis; UDP-N-acetyl-alpha-D-glucosamine biosynthesis; N-acetyl-alpha-D-glucosamine 1-phosphate from alpha-D-glucosamine 6-phosphate (route II): step 2/2. It functions in the pathway nucleotide-sugar biosynthesis; UDP-N-acetyl-alpha-D-glucosamine biosynthesis; UDP-N-acetyl-alpha-D-glucosamine from N-acetyl-alpha-D-glucosamine 1-phosphate: step 1/1. Its pathway is bacterial outer membrane biogenesis; LPS lipid A biosynthesis. Functionally, catalyzes the last two sequential reactions in the de novo biosynthetic pathway for UDP-N-acetylglucosamine (UDP-GlcNAc). The C-terminal domain catalyzes the transfer of acetyl group from acetyl coenzyme A to glucosamine-1-phosphate (GlcN-1-P) to produce N-acetylglucosamine-1-phosphate (GlcNAc-1-P), which is converted into UDP-GlcNAc by the transfer of uridine 5-monophosphate (from uridine 5-triphosphate), a reaction catalyzed by the N-terminal domain. The polypeptide is Bifunctional protein GlmU (Paraburkholderia phytofirmans (strain DSM 17436 / LMG 22146 / PsJN) (Burkholderia phytofirmans)).